The primary structure comprises 346 residues: Short-wave-sensitive opsin 1 (346 aa).

At 1 to 31 the chain is on the extracellular side; that stretch reads MSGEDDFYLFQNISSVGPWDGPQYHLAPVWA. Residue Asn-12 is glycosylated (N-linked (GlcNAc...) asparagine). The chain crosses the membrane as a helical span at residues 32–56; it reads FRLQAAFMGFVFFVGTPLNAIVLVA. Residues 57-68 lie on the Cytoplasmic side of the membrane; it reads TLHYKKLRQPLN. Residues 69–94 form a helical membrane-spanning segment; the sequence is YILVNVSLGGFLFCIFSVFTVFIASC. The Extracellular portion of the chain corresponds to 95–108; sequence HGYFLFGRHVCALE. A disulfide bridge connects residues Cys-105 and Cys-182. Residues 109-128 traverse the membrane as a helical segment; it reads AFLGSVAGLVTGWSLAFLAF. The Cytoplasmic portion of the chain corresponds to 129–147; the sequence is ERYVVICKPFGSIRFNSKH. The helical transmembrane segment at 148-171 threads the bilayer; the sequence is ALMVVLATWIIGIGVSIPPFFGWS. Topologically, residues 172–197 are extracellular; the sequence is RFIPEGLQCSCGPDWYTVGTKYRSEY. A helical membrane pass occupies residues 198–225; the sequence is YTWFLFIFCFIIPLSLICFSYSQLLRTL. Residues 226–247 lie on the Cytoplasmic side of the membrane; sequence RAVAAQQQESATTQKAEREVSH. The chain crosses the membrane as a helical span at residues 248–271; sequence MVVVMVGSFCLCYVPYAALAMYMV. Topologically, residues 272 to 279 are extracellular; that stretch reads NNRNHGLD. The chain crosses the membrane as a helical span at residues 280–304; sequence LRLVTIPAFFSKSSCVYNPIIYCFM. Lys-291 carries the N6-(retinylidene)lysine modification. Over 305–346 the chain is Cytoplasmic; sequence NKQFRACILEMVCRKPMADESDVSGSQKTEVSTVSSSKVGPH. Residues 324-346 are disordered; that stretch reads ESDVSGSQKTEVSTVSSSKVGPH. Low complexity predominate over residues 330-346; sequence SQKTEVSTVSSSKVGPH.

This sequence belongs to the G-protein coupled receptor 1 family. Opsin subfamily. Post-translationally, phosphorylated on some or all of the serine and threonine residues present in the C-terminal region. In terms of tissue distribution, expressed in the inner and outer segments of cone photoreceptor cells in the retina (at protein level).

The protein localises to the cell membrane. It localises to the photoreceptor inner segment. It is found in the cell projection. Its subcellular location is the cilium. The protein resides in the photoreceptor outer segment. The protein localises to the cytoplasm. It localises to the perinuclear region. Functionally, visual pigments are the light-absorbing molecules that mediate vision. They consist of an apoprotein, opsin, covalently linked to cis-retinal. Required for the maintenance of cone outer segment organization in the ventral retina, but not essential for the maintenance of functioning cone photoreceptors. Involved in ensuring correct abundance and localization of retinal membrane proteins. May increase spectral sensitivity in dim light. The chain is Short-wave-sensitive opsin 1 (Opn1sw) from Mus musculus (Mouse).